A 732-amino-acid chain; its full sequence is Elongation factor 2 (732 aa).

In terms of domain architecture, tr-type G spans 19–228; that stretch reads ELVRNIGIVA…TKITFKDIVE (210 aa). Residues 28-35, 94-98, and 148-151 contribute to the GTP site; these read AHIDHGKT, DTPGH, and NKID. Histidine 598 is subject to Diphthamide.

Belongs to the TRAFAC class translation factor GTPase superfamily. Classic translation factor GTPase family. EF-G/EF-2 subfamily.

The protein localises to the cytoplasm. In terms of biological role, catalyzes the GTP-dependent ribosomal translocation step during translation elongation. During this step, the ribosome changes from the pre-translocational (PRE) to the post-translocational (POST) state as the newly formed A-site-bound peptidyl-tRNA and P-site-bound deacylated tRNA move to the P and E sites, respectively. Catalyzes the coordinated movement of the two tRNA molecules, the mRNA and conformational changes in the ribosome. This is Elongation factor 2 from Thermoplasma volcanium (strain ATCC 51530 / DSM 4299 / JCM 9571 / NBRC 15438 / GSS1).